We begin with the raw amino-acid sequence, 37 residues long: Gene 40 protein (37 aa).

This Mycobacterium phage L5 (Mycobacteriophage L5) protein is Gene 40 protein (40).